The sequence spans 370 residues: 1-propanol dehydrogenase PduQ (370 aa).

Belongs to the iron-containing alcohol dehydrogenase family. As to quaternary structure, interacts with PduP, probably via the N-terminus of PduQ. Fe cation is required as a cofactor.

The protein localises to the bacterial microcompartment. It carries out the reaction 1-propanol + NAD(+) = propanal + NADH + H(+). It participates in polyol metabolism; 1,2-propanediol degradation. Functionally, an iron-dependent alcohol dehydrogenase required for optimal 1,2-propanediol (1,2-PD) degradation. NAD(+) and NADH are regenerated internally within the bacterial microcompartment (BMC) dedicated to 1,2-PD degradation by the PduP and PduQ enzymes, which reduce NAD(+) and oxidize NADH respectively, although there must also be cofactor transport across the BMC. Its function is as follows. Expression of a cosmid containing the full 21-gene pdu operon in E.coli allows E.coli to grow on 1,2-propanediol (1,2-PD) with the appearance of bacterial microcompartments (BMC) in its cytoplasm. The 1,2-PD-specific bacterial microcompartment (BMC) concentrates low levels of 1,2-PD catabolic enzymes, concentrates volatile reaction intermediates thus enhancing pathway flux and keeps the level of toxic, mutagenic propionaldehyde low. The protein is 1-propanol dehydrogenase PduQ of Citrobacter freundii.